Reading from the N-terminus, the 238-residue chain is MKLYPAIDLLNGKSVRLTQGDYDQVSLTEDPLYQAQRLTDAGFAHLHLVDLDGARAQRPINRRIITRIREQTSAFIELGGGIRTLAAMEIYLTIGIDRLIVGSAAVSDPDLVEQAIARFGSNRIAVGIDTRAGKVATNGWLTTSQQTANALLTAMQQRGVTTFIVTDIAKDGMMQGPNAQLLADLQQAMPQATIIASGGVSSLADLRRLQTAGIQAAIIGKAWQTGAIELAMLKQMEG.

Asp-8 serves as the catalytic Proton acceptor. The active-site Proton donor is Asp-129.

This sequence belongs to the HisA/HisF family.

The protein resides in the cytoplasm. It catalyses the reaction 1-(5-phospho-beta-D-ribosyl)-5-[(5-phospho-beta-D-ribosylamino)methylideneamino]imidazole-4-carboxamide = 5-[(5-phospho-1-deoxy-D-ribulos-1-ylimino)methylamino]-1-(5-phospho-beta-D-ribosyl)imidazole-4-carboxamide. Its pathway is amino-acid biosynthesis; L-histidine biosynthesis; L-histidine from 5-phospho-alpha-D-ribose 1-diphosphate: step 4/9. The protein is 1-(5-phosphoribosyl)-5-[(5-phosphoribosylamino)methylideneamino] imidazole-4-carboxamide isomerase of Lacticaseibacillus casei (strain BL23) (Lactobacillus casei).